An 832-amino-acid chain; its full sequence is MIAWRLPLCVLLVAAVESHLGALGPKNVSQKDAEFERTYADDVNSELVNIYTFNHTVTRNRTEGVRVSVNVLNKQKGAPLLFVVRQKEAVVSFQVPLILRGLYQRKYLYQKVERTLCQPPTKNESEIQFFYVDVSTLSPVNTTYQLRVNRVDNFVLRTGELFTFNTTAAQPQYFKYEFPDGVDSVIVKVTSKKAFPCSVISIQDVLCPVYDLDNNVAFIGMYQTMTKKAAITVQRKDFPSNSFYVVVVVKTEDQACGGSLPFYPFVEDEPVDQGHRQKTLSVLVSQAVTSEAYVGGMLFCLGIFLSFYLLTVLLACWENWRQRKKTLLVAIDRACPESGHPRVLADSFPGSAPYEGYNYGSFENGSGSTDGLVESTGSGDLSYSYQDRSFDPVGARPRLDSMSSVEEDDYDTLTDIDSDKNVIRTKQYLCVADLARKDKRVLRKKYQIYFWNIATIAVFYALPVVQLVITYQTVVNVTGNQDICYYNFLCAHPLGNLSAFNNILSNLGYILLGLLFLLIILQREINHNRALLRNDLYALECGIPKHFGLFYAMGTALMMEGLLSACYHVCPNYTNFQFDTSFMYMIAGLCMLKLYQKRHPDINASAYSAYACLAIVIFFSVLGVVFGKGNTAFWIVFSVIHIISTLLLSTQLYYMGRWKLDSGIFRRILHVLYTDCIRQCSGPLYTDRMVLLVMGNIINWSLAAYGLIMRPNDFASYLLAIGICNLLLYFAFYIIMKLRSGERIKLIPLLCIVCTSVVWGFALFFFFQGLSTWQKTPAESREHNRDCILLDFFDDHDIWHFLSSIAMFGSFLVLLTLDDDLDTVQRDKIYVF.

The first 15 residues, 1 to 15 (MIAWRLPLCVLLVAA), serve as a signal peptide directing secretion. At 16–293 (VESHLGALGP…VSQAVTSEAY (278 aa)) the chain is on the extracellular side. Residues Asn-27, Asn-54, Asn-60, Asn-123, Asn-141, and Asn-165 are each glycosylated (N-linked (GlcNAc...) asparagine). A helical transmembrane segment spans residues 294–314 (VGGMLFCLGIFLSFYLLTVLL). Topologically, residues 315–447 (ACWENWRQRK…DKRVLRKKYQ (133 aa)) are cytoplasmic. Residues Ser-401, Ser-403, and Ser-404 each carry the phosphoserine modification. Residues 448 to 468 (IYFWNIATIAVFYALPVVQLV) form a helical membrane-spanning segment. At 469-499 (ITYQTVVNVTGNQDICYYNFLCAHPLGNLSA) the chain is on the extracellular side. Residues Asn-476 and Asn-496 are each glycosylated (N-linked (GlcNAc...) asparagine). A helical transmembrane segment spans residues 500 to 520 (FNNILSNLGYILLGLLFLLII). Over 521–546 (LQREINHNRALLRNDLYALECGIPKH) the chain is Cytoplasmic. Residues 547-567 (FGLFYAMGTALMMEGLLSACY) traverse the membrane as a helical segment. Topologically, residues 568–605 (HVCPNYTNFQFDTSFMYMIAGLCMLKLYQKRHPDINAS) are extracellular. N-linked (GlcNAc...) asparagine glycans are attached at residues Asn-572 and Asn-603. Residues 606–626 (AYSAYACLAIVIFFSVLGVVF) form a helical membrane-spanning segment. Over 627–631 (GKGNT) the chain is Cytoplasmic. Residues 632–652 (AFWIVFSVIHIISTLLLSTQL) form a helical membrane-spanning segment. Residues 653 to 688 (YYMGRWKLDSGIFRRILHVLYTDCIRQCSGPLYTDR) are Extracellular-facing. Residues 689-709 (MVLLVMGNIINWSLAAYGLIM) form a helical membrane-spanning segment. The Cytoplasmic segment spans residues 710-715 (RPNDFA). A helical transmembrane segment spans residues 716–736 (SYLLAIGICNLLLYFAFYIIM). The Extracellular portion of the chain corresponds to 737-746 (KLRSGERIKL). The helical transmembrane segment at 747-767 (IPLLCIVCTSVVWGFALFFFF) threads the bilayer. Residues 768–796 (QGLSTWQKTPAESREHNRDCILLDFFDDH) are Cytoplasmic-facing. Residues 797 to 817 (DIWHFLSSIAMFGSFLVLLTL) traverse the membrane as a helical segment. Residues 818-832 (DDDLDTVQRDKIYVF) lie on the Extracellular side of the membrane.

It belongs to the SID1 family. In terms of assembly, interacts with adapter protein complex 1 (AP-1) and AP-2, but not AP-3 and AP-4. Interacts with LAMP2. Glycosylated. As to expression, highly expressed in the liver, brain, kidney and intestine (at protein level).

The protein localises to the lysosome membrane. It is found in the cell membrane. In terms of biological role, mediates the translocation of RNA and DNA across the lysosomal membrane during RNA and DNA autophagy (RDA), a process in which RNA or DNA is directly imported into lysosomes in an ATP-dependent manner, and degraded. Involved in the uptake of single-stranded oligonucleotides by living cells, a process called gymnosis. In vitro, mediates the uptake of linear DNA more efficiently than that of circular DNA, but exhibits similar uptake efficacy toward RNA and DNA. Binds long double-stranded RNA (dsRNA) (500 - 700 base pairs), but not dsRNA shorter than 100 bp. The protein is SID1 transmembrane family member 2 (Sidt2) of Rattus norvegicus (Rat).